The chain runs to 130 residues: Modulator protein MzrA (130 aa).

The Cytoplasmic segment spans residues 1–15 (MIAAFIKRHAPQRRL). A helical membrane pass occupies residues 16 to 36 (SLWLALPVVALLALVMMPALF). Residues 37–130 (RHDSALQIRA…RISFKPQSIG (94 aa)) are Periplasmic-facing.

Belongs to the MzrA family. Interacts with EnvZ.

The protein resides in the cell inner membrane. Functionally, modulates the activity of the EnvZ/OmpR two-component regulatory system, probably by directly modulating EnvZ enzymatic activity and increasing stability of phosphorylated OmpR. The chain is Modulator protein MzrA from Erwinia tasmaniensis (strain DSM 17950 / CFBP 7177 / CIP 109463 / NCPPB 4357 / Et1/99).